Reading from the N-terminus, the 178-residue chain is Large ribosomal subunit protein uL5 (178 aa).

This sequence belongs to the universal ribosomal protein uL5 family. Part of the 50S ribosomal subunit; part of the 5S rRNA/L5/L18/L25 subcomplex. Contacts the 5S rRNA and the P site tRNA. Forms a bridge to the 30S subunit in the 70S ribosome.

In terms of biological role, this is one of the proteins that bind and probably mediate the attachment of the 5S RNA into the large ribosomal subunit, where it forms part of the central protuberance. In the 70S ribosome it contacts protein S13 of the 30S subunit (bridge B1b), connecting the 2 subunits; this bridge is implicated in subunit movement. Contacts the P site tRNA; the 5S rRNA and some of its associated proteins might help stabilize positioning of ribosome-bound tRNAs. This Psychrobacter sp. (strain PRwf-1) protein is Large ribosomal subunit protein uL5.